A 329-amino-acid polypeptide reads, in one-letter code: Vomeronasal type-1 receptor 42 (329 aa).

Residues 1 to 32 (MGDILFSSPQSMFSHTMNKNSILHTHSIIGKT) lie on the Extracellular side of the membrane. The chain crosses the membrane as a helical span at residues 33–53 (FFSEIGIGISGNSFLLLVHIL). Over 54 to 65 (KFIRGHRPRLTD) the chain is Cytoplasmic. A helical transmembrane segment spans residues 66 to 86 (LPIGLLSLIHLLMLLVAAFIA). Residues 87 to 109 (TDIFISRRGWDDIICKFLVYLYR) lie on the Extracellular side of the membrane. A disulfide bridge connects residues C101 and C188. Residues 110 to 130 (VLRGFSLCTTSMLSILQAIIL) traverse the membrane as a helical segment. Residues 131–150 (SPRSSCLAKFKHISPHHISG) lie on the Cytoplasmic side of the membrane. The chain crosses the membrane as a helical span at residues 151 to 171 (AILFLSVLYMLIGSQLLVSII). Topologically, residues 172 to 209 (ATPNLTMNDFIYVTQSCSILPLSYLMQSIYSTLLAIRE) are extracellular. An N-linked (GlcNAc...) asparagine glycan is attached at N175. The helical transmembrane segment at 210-230 (FFLISLMVLSNWYMVALLSMH) threads the bilayer. Residues 231 to 254 (RKQTQHLHGTNLSPKKSPEQSATQ) are Cytoplasmic-facing. A helical membrane pass occupies residues 255-275 (TILMLISFFLLMTIYDTIVSC). Residues 276–285 (SRTMFLNDPT) lie on the Extracellular side of the membrane. A helical membrane pass occupies residues 286–306 (SYSIELFIMHIYATVSPFVFM). Over 307 to 329 (STEKHIVNFLRSLGKRVINFNLH) the chain is Cytoplasmic.

This sequence belongs to the G-protein coupled receptor 1 family.

Its subcellular location is the cell membrane. In terms of biological role, putative pheromone receptor implicated in the regulation of social and reproductive behavior. The sequence is that of Vomeronasal type-1 receptor 42 (Vmn1r42) from Mus musculus (Mouse).